The primary structure comprises 249 residues: Methionine aminopeptidase (249 aa).

Residue His77 coordinates substrate. Positions 94, 105, and 168 each coordinate a divalent metal cation. His175 provides a ligand contact to substrate. Residues Glu201 and Glu232 each coordinate a divalent metal cation.

The protein belongs to the peptidase M24A family. Methionine aminopeptidase type 1 subfamily. In terms of assembly, monomer. Co(2+) is required as a cofactor. Requires Zn(2+) as cofactor. It depends on Mn(2+) as a cofactor. The cofactor is Fe(2+).

The enzyme catalyses Release of N-terminal amino acids, preferentially methionine, from peptides and arylamides.. In terms of biological role, removes the N-terminal methionine from nascent proteins. The N-terminal methionine is often cleaved when the second residue in the primary sequence is small and uncharged (Met-Ala-, Cys, Gly, Pro, Ser, Thr, or Val). Requires deformylation of the N(alpha)-formylated initiator methionine before it can be hydrolyzed. This is Methionine aminopeptidase from Clostridium perfringens (strain 13 / Type A).